A 346-amino-acid polypeptide reads, in one-letter code: Holliday junction branch migration complex subunit RuvB (346 aa).

Residues Met1 to Tyr188 are large ATPase domain (RuvB-L). Residues Leu27, Arg28, Gly69, Lys72, Thr73, Thr74, Glu135–Phe137, Arg178, Tyr188, and Arg225 contribute to the ATP site. Residue Thr73 coordinates Mg(2+). A small ATPAse domain (RuvB-S) region spans residues Pro189 to Asp259. The tract at residues Arg262 to Gly346 is head domain (RuvB-H). Positions 298, 317, and 322 each coordinate DNA.

The protein belongs to the RuvB family. In terms of assembly, homohexamer. Forms an RuvA(8)-RuvB(12)-Holliday junction (HJ) complex. HJ DNA is sandwiched between 2 RuvA tetramers; dsDNA enters through RuvA and exits via RuvB. An RuvB hexamer assembles on each DNA strand where it exits the tetramer. Each RuvB hexamer is contacted by two RuvA subunits (via domain III) on 2 adjacent RuvB subunits; this complex drives branch migration. In the full resolvosome a probable DNA-RuvA(4)-RuvB(12)-RuvC(2) complex forms which resolves the HJ.

The protein resides in the cytoplasm. The catalysed reaction is ATP + H2O = ADP + phosphate + H(+). Its function is as follows. The RuvA-RuvB-RuvC complex processes Holliday junction (HJ) DNA during genetic recombination and DNA repair, while the RuvA-RuvB complex plays an important role in the rescue of blocked DNA replication forks via replication fork reversal (RFR). RuvA specifically binds to HJ cruciform DNA, conferring on it an open structure. The RuvB hexamer acts as an ATP-dependent pump, pulling dsDNA into and through the RuvAB complex. RuvB forms 2 homohexamers on either side of HJ DNA bound by 1 or 2 RuvA tetramers; 4 subunits per hexamer contact DNA at a time. Coordinated motions by a converter formed by DNA-disengaged RuvB subunits stimulates ATP hydrolysis and nucleotide exchange. Immobilization of the converter enables RuvB to convert the ATP-contained energy into a lever motion, pulling 2 nucleotides of DNA out of the RuvA tetramer per ATP hydrolyzed, thus driving DNA branch migration. The RuvB motors rotate together with the DNA substrate, which together with the progressing nucleotide cycle form the mechanistic basis for DNA recombination by continuous HJ branch migration. Branch migration allows RuvC to scan DNA until it finds its consensus sequence, where it cleaves and resolves cruciform DNA. This is Holliday junction branch migration complex subunit RuvB from Halorhodospira halophila (strain DSM 244 / SL1) (Ectothiorhodospira halophila (strain DSM 244 / SL1)).